Reading from the N-terminus, the 368-residue chain is Isocitrate dehydrogenase [NAD] regulatory subunit 3, mitochondrial (368 aa).

A mitochondrion-targeting transit peptide spans 1–26 (MARRSVSIFNRLLANPPSPFTSLSRS).

It belongs to the isocitrate and isopropylmalate dehydrogenases family. In terms of assembly, heterooligomer of catalytic and regulatory subunits. Interacts with 14-3-3-like proteins GRF1 GRF3 and GRF8. In terms of tissue distribution, mainly expressed at a low level in pollen.

It is found in the mitochondrion. In terms of biological role, performs an essential role in the oxidative function of the citric acid cycle. This Arabidopsis thaliana (Mouse-ear cress) protein is Isocitrate dehydrogenase [NAD] regulatory subunit 3, mitochondrial (IDH3).